The sequence spans 728 residues: MPRVVIVGSGMQYSYRVIDLLLTFFFYSGLYGLIAAKTYLQVTDPRYPSNQQCENTDDVPQSFQRPRDTRSTHDDTDLLLLESGSSLGGTWAEERLYPNLLSQNSEGLYEFSDMSLSEAMDGVDDEGQADRDTPVEDRFIPGWKLSRYLTAWSRKWNLPQYMRFNWQVKKISRLPTKEWELGIVIHPDQPSQTRHTTILCDKLILSPGLTSVPNILNFSPASGRPSAPAENVIHAKEVGPWCRDNLGYQPIPGQDAHPSPTKPSRVPRRVAIYGGAKSSFDLVHMFATLHLKDPSFHLKGLDATDSIEPVQVHWIIRDGGSGPAWMSPPRSNMPNGQSIASDKVASTRFVGVLSPCTPLVPKRLTLRRSSNFLGWKLAVEGSWLARLLHGNPIGRYFVRRFWKALDKSWGDFAGYDSAQHGGKMEHLRPTNSIIYCGAPLGIANQRGFWDAVRAPNVHIHRSAIESVSGDASSKGVIIDLADDTTLPLTDLLIQATGWKPNVPVEFTPPPLTLQLGLSCRVPRAILTPTNSAQDVKVDPEIKKLIHYWDGIDSVSASRIRRVFGPNSSPPKDVVESTTAPTDEFEFSPYRLFRRMVAPELVEEGDRSFVALGFVLTATTAVVAEVQALWAAAFLTGGLDDTRTHDALSINAMSRSDVDRDVSEDVVWGGLTGVGPGVDTLNYNDMLLRDLGLSPYRMGGGFINELTSVYTPKAYRGIVEEWKAKHGRP.

A helical transmembrane segment spans residues 17-37; the sequence is VIDLLLTFFFYSGLYGLIAAK. Residues 50–64 are compositionally biased toward polar residues; that stretch reads NQQCENTDDVPQSFQ. The tract at residues 50 to 72 is disordered; sequence NQQCENTDDVPQSFQRPRDTRST. V168 contacts FAD. 490 to 491 contacts NADP(+); the sequence is DL.

It belongs to the FAD-binding monooxygenase family. The cofactor is FAD.

It localises to the membrane. The protein operates within secondary metabolite metabolism. Multifunctional FAD-dependent monooxygenase; part of the cluster that mediates the biosynthesis of a highly modified cyclo-arginine-tryptophan dipeptide (cRW). Within the pathway, avaB uses the avaA cyclo-arginine-tryptophan dipeptide (cRW) as substrate to generate the cyclo-Arg-formylkynurenine diketopiperazine (DKP). AvaB also catalyzes an additional N-oxidation of the avaC product which is followed by cyclization and dehydration. The first step of the pathway is perfornmed by the arginine-containing cyclodipeptide synthase (RCPDS) avaA that acts as the scaffold-generating enzyme and is responsible for formation of the cyclo-Arg-Trp (cRW) diketopiperazine. AvaB then acts as a multifunctional flavoenzyme that is responsible for generating the cyclo-Arg-formylkynurenine DKP, which can be deformylated by avaC. AvaB then further catalyzes an additional N-oxidation followed by cyclization and dehydration. The next step is an N-acetylation of the guanidine group catalyzed by the arginine N-acetyltransferase avaD. The roles of the additional enzymes identified within the ava cluster still have to be determined. The protein is FAD-dependent monooxygenase avaB of Aspergillus versicolor.